Reading from the N-terminus, the 360-residue chain is Peptide chain release factor 1 (360 aa).

Position 235 is an N5-methylglutamine (Gln235). Positions Arg285–Arg295 are enriched in basic and acidic residues. The disordered stretch occupies residues Arg285–Thr309.

This sequence belongs to the prokaryotic/mitochondrial release factor family. Post-translationally, methylated by PrmC. Methylation increases the termination efficiency of RF1.

The protein resides in the cytoplasm. Peptide chain release factor 1 directs the termination of translation in response to the peptide chain termination codons UAG and UAA. The protein is Peptide chain release factor 1 of Actinobacillus pleuropneumoniae serotype 7 (strain AP76).